The chain runs to 996 residues: Protein psiR (996 aa).

Positions 1–21 are cleaved as a signal peptide; the sequence is MKKIILMLLLFSIFFILKSES. N-linked (GlcNAc...) asparagine glycans are attached at residues Asn-79, Asn-117, Asn-323, Asn-396, Asn-428, Asn-474, Asn-500, Asn-645, and Asn-779. The 146-residue stretch at 105–250 folds into the PA14 domain; the sequence is QSLSNPNIYS…YDECGVCEGD (146 aa).

It belongs to the prespore-cell-inducing factor family.

Its subcellular location is the secreted. This Dictyostelium discoideum (Social amoeba) protein is Protein psiR (psiR).